The following is a 238-amino-acid chain: HTH-type transcriptional regulator TreR (238 aa).

Residues 1-71 (MKVNKFITIY…RGKGSVVLNR (71 aa)) enclose the HTH gntR-type domain. A DNA-binding region (H-T-H motif) is located at residues 31–50 (EHELTAQYGTSRETVRKALH).

In terms of assembly, dimer of dimers.

In terms of biological role, repressor for the trePA operon. It is able to bind trehalose-6-phosphate. The protein is HTH-type transcriptional regulator TreR (treR) of Bacillus subtilis (strain 168).